A 466-amino-acid chain; its full sequence is MERSLSFEPYLLTPLDHIIKDFYVSSFISFPLHDPTTAVSALKDGVERLTRALPFLSGARVPSSKLPGKRNVMEIHPSPESLEWIPMLQIKHYRDTTLVATCSPGPTGCSDLDDSWCALPIIIPADRPSPVARFRASVFPDGILLCMTLNHAVFDGSGLGTVLKMLATCCCANSAMDHPVSLPTTYAKEASSRQIILESAAPSSGSDSEAYDRIFKSNDIIPGLDKGITSRRFSFPASKIRALKDACNAAKPTDQDPAISRNDVLTALLTICMTRARQTEQTKNLTTQLAVPVNLRRKFHPSLPDSYLGNTIIPLVVDIDPPTVPSSRCGTSPMHAHLNELTNLSLRIRKELKLLDEKDYTGGLVSYLREQSDWGATSMKFTDITVSSLRHLDINGLDFGPEIGRANSFDVQSGMYPGICDIMPTCGRDRVEDINDVPWDVCVTLEDSAWSAFMEDDLVLWALEKI.

The protein belongs to the fumigaclavine B O-acetyltransferase family.

It participates in alkaloid biosynthesis. In terms of biological role, communesin N16 acyltransferase; part of the gene cluster that mediates the biosynthesis of communesins, a prominent class of indole alkaloids with great potential as pharmaceuticals. Communesins are biosynthesized by the coupling of tryptamine and aurantioclavine, two building blocks derived from L-tryptophan. The L-tryptophan decarboxylase cnsB converts L-tryptophan to tryptamine, whereas the tryptophan dimethylallyltransferase cnsF converts L-tryptophan to 4-dimethylallyl tryptophan which is further transformed to aurantioclavine by the aurantioclavine synthase cnsA, probably aided by the catalase cnsD. The cytochrome P450 monooxygenase cnsC catalyzes the heterodimeric coupling between the two different indole moieties, tryptamine and aurantioclavine, to construct vicinal quaternary stereocenters and yield the heptacyclic communesin scaffold. The O-methyltransferase cnsE then methylates the communesin scaffold to produce communesin K, the simplest characterized communesin that contains the heptacyclic core. The dioxygenase cnsJ converts communesin K into communesin I. Acylation to introduce the hexadienyl group at position N16 of communesin I by the acyltransferase cnsK leads to the production of communesin B. The hexadienyl group is produced by the highly reducing polyketide synthase cnsI, before being hydrolytically removed from cnsI by the serine hydrolase cnsH, converted into hexadienyl-CoA by the CoA ligase cnsG, and then transferred to communesin I by cnsK. Surprisingly, cnsK may also be a promiscuous acyltransferase that can tolerate a range of acyl groups, including acetyl-, propionyl-, and butyryl-CoA, which lead to communesins A, G and H respectively. The roles of the alpha-ketoglutarate-dependent dioxygenases cnsM and cnsP have still to be determined. This chain is Communesin N16 acyltransferase cnsK, found in Penicillium expansum (Blue mold rot fungus).